We begin with the raw amino-acid sequence, 162 residues long: Nucleotide-binding protein ABSDF0503 (162 aa).

This sequence belongs to the YajQ family.

Functionally, nucleotide-binding protein. This chain is Nucleotide-binding protein ABSDF0503, found in Acinetobacter baumannii (strain SDF).